A 197-amino-acid chain; its full sequence is Large ribosomal subunit protein uL5 (197 aa).

The protein belongs to the universal ribosomal protein uL5 family. Part of the 50S ribosomal subunit; contacts the 5S rRNA and probably tRNA. Forms a bridge to the 30S subunit in the 70S ribosome.

Functionally, this is one of the proteins that bind and probably mediate the attachment of the 5S RNA into the large ribosomal subunit, where it forms part of the central protuberance. In the 70S ribosome it contacts protein S13 of the 30S subunit (bridge B1b), connecting the 2 subunits; this bridge is implicated in subunit movement. May contact the P site tRNA; the 5S rRNA and some of its associated proteins might help stabilize positioning of ribosome-bound tRNAs. The chain is Large ribosomal subunit protein uL5 from Caldivirga maquilingensis (strain ATCC 700844 / DSM 13496 / JCM 10307 / IC-167).